The following is a 274-amino-acid chain: NAD(P)H dehydrogenase [quinone] 1 (274 aa).

FAD-binding positions include H12, 18–19 (FN), and Q67. S82 is subject to Phosphoserine. FAD is bound at residue 104 to 107 (LQWF). Residue 126 to 128 (AYT) coordinates substrate. FAD-binding positions include 148–151 (TTGG), Y156, and R201. An important for apoenzyme conformational stability region spans residues 225-274 (PSSLFDLNFQAGFLMKKEVQDEEKNKKFGLSVGHHLGKSIPTDNQIKARK). Glycyl lysine isopeptide (Lys-Gly) (interchain with G-Cter in SUMO2) cross-links involve residues K250 and K251.

This sequence belongs to the NAD(P)H dehydrogenase (quinone) family. Homodimer. Interacts with PDLIM4 isoform 2; this interaction stabilizes PDLIM4 isoform 2 in response to oxidative stress and protects it from ubiquitin-independent degradation by the core 20S proteasome. Interacts with TP73 (via SAM domain); this interaction is NADH-dependent, stabilizes TP73 in response to oxidative stress and protects it from ubiquitin-independent degradation by the 20S proteasome. Interacts with TP53; this interaction is NADH-dependent, stabilizes TP53 in response to oxidative stress and protects it from ubiquitin-independent degradation by the 20S proteasome. FAD is required as a cofactor.

It is found in the cytoplasm. It localises to the cytosol. It catalyses the reaction a quinone + NADH + H(+) = a quinol + NAD(+). It carries out the reaction a quinone + NADPH + H(+) = a quinol + NADP(+). The catalysed reaction is ubiquinone-10 + NADH + H(+) = ubiquinol-10 + NAD(+). The enzyme catalyses menadione + NADH + H(+) = menadiol + NAD(+). In terms of biological role, flavin-containing quinone reductase that catalyzes two-electron reduction of quinones to hydroquinones using either NADH or NADPH as electron donors. In a ping-pong kinetic mechanism, the electrons are sequentially transferred from NAD(P)H to flavin cofactor and then from reduced flavin to the quinone, bypassing the formation of semiquinone and reactive oxygen species. Regulates cellular redox state primarily through quinone detoxification. Reduces components of plasma membrane redox system such as coenzyme Q and vitamin quinones, producing antioxidant hydroquinone forms. In the process may function as superoxide scavenger to prevent hydroquinone oxidation and facilitate excretion. Alternatively, can activate quinones and their derivatives by generating redox reactive hydroquinones with DNA cross-linking antitumor potential. Acts as a gatekeeper of the core 20S proteasome known to degrade proteins with unstructured regions. Upon oxidative stress, interacts with tumor suppressors TP53 and TP73 in a NADH-dependent way and inhibits their ubiquitin-independent degradation by the 20S proteasome. In Pongo abelii (Sumatran orangutan), this protein is NAD(P)H dehydrogenase [quinone] 1 (NQO1).